The following is a 119-amino-acid chain: Protein TusC (119 aa).

This sequence belongs to the DsrF/TusC family. As to quaternary structure, heterohexamer, formed by a dimer of trimers. The hexameric TusBCD complex contains 2 copies each of TusB, TusC and TusD. The TusBCD complex interacts with TusE.

It is found in the cytoplasm. Its function is as follows. Part of a sulfur-relay system required for 2-thiolation of 5-methylaminomethyl-2-thiouridine (mnm(5)s(2)U) at tRNA wobble positions. This is Protein TusC from Escherichia coli O45:K1 (strain S88 / ExPEC).